A 199-amino-acid chain; its full sequence is dCTP deaminase, dUMP-forming (199 aa).

DCTP is bound by residues lysine 101–arginine 106, aspartate 119, threonine 127–glutamate 129, glutamine 148, tyrosine 162, and glutamine 174. Glutamate 129 acts as the Proton donor/acceptor in catalysis. Positions glycine 163 to arginine 199 are disordered. Residues tyrosine 171–tyrosine 183 are compositionally biased toward polar residues.

Belongs to the dCTP deaminase family. Homotrimer.

The enzyme catalyses dCTP + 2 H2O = dUMP + NH4(+) + diphosphate. Its pathway is pyrimidine metabolism; dUMP biosynthesis; dUMP from dCTP: step 1/1. Functionally, bifunctional enzyme that catalyzes both the deamination of dCTP to dUTP and the hydrolysis of dUTP to dUMP without releasing the toxic dUTP intermediate. The chain is dCTP deaminase, dUMP-forming from Nocardia farcinica (strain IFM 10152).